Here is a 110-residue protein sequence, read N- to C-terminus: uncharacterized protein (110 aa).

The protein belongs to the RuBisCO large chain family.

The protein resides in the mitochondrion. This is an uncharacterized protein from Arabidopsis thaliana (Mouse-ear cress).